The following is a 217-amino-acid chain: MAPQLRIFVPPHPLIRHWLGIARDRQTPTPLFRTAIAELGRWLAYEAVREWLPTIPAAVQTPLAETPAEFVDFSQPLAIVPILRAGLGLVESVQQVLPTARIFHVGLKRDEVSLEPRCYLNHLPEQLEVNSRVLVLDPMLATGGSLLYTLDLLRDRGVSAEQVRVLSIVAAPPALQKLSQAYPALTIYSAIIDEQLNDKGFIVPGLGDAGDRLFGTP.

5-phospho-alpha-D-ribose 1-diphosphate contacts are provided by residues Arg-84, Arg-109, and 137-145; that span reads DPMLATGGS. Uracil contacts are provided by residues Ile-202 and 207-209; that span reads GDA. Residue Asp-208 participates in 5-phospho-alpha-D-ribose 1-diphosphate binding.

The protein belongs to the UPRTase family. The cofactor is Mg(2+).

It carries out the reaction UMP + diphosphate = 5-phospho-alpha-D-ribose 1-diphosphate + uracil. Its pathway is pyrimidine metabolism; UMP biosynthesis via salvage pathway; UMP from uracil: step 1/1. Its activity is regulated as follows. Allosterically activated by GTP. Catalyzes the conversion of uracil and 5-phospho-alpha-D-ribose 1-diphosphate (PRPP) to UMP and diphosphate. The polypeptide is Uracil phosphoribosyltransferase (Synechococcus elongatus (strain ATCC 33912 / PCC 7942 / FACHB-805) (Anacystis nidulans R2)).